A 164-amino-acid polypeptide reads, in one-letter code: UPF0262 protein Nham_0287 (164 aa).

Belongs to the UPF0262 family.

This Nitrobacter hamburgensis (strain DSM 10229 / NCIMB 13809 / X14) protein is UPF0262 protein Nham_0287.